Here is a 250-residue protein sequence, read N- to C-terminus: tRNA (guanine-N(1)-)-methyltransferase (250 aa).

Residues glycine 114 and 134–139 (IGDYVL) each bind S-adenosyl-L-methionine.

The protein belongs to the RNA methyltransferase TrmD family. In terms of assembly, homodimer.

It localises to the cytoplasm. The catalysed reaction is guanosine(37) in tRNA + S-adenosyl-L-methionine = N(1)-methylguanosine(37) in tRNA + S-adenosyl-L-homocysteine + H(+). In terms of biological role, specifically methylates guanosine-37 in various tRNAs. The chain is tRNA (guanine-N(1)-)-methyltransferase from Moorella thermoacetica (strain ATCC 39073 / JCM 9320).